Here is a 211-residue protein sequence, read N- to C-terminus: Urease accessory protein UreF (211 aa).

The segment at 68-93 (LAPDGADRETDARTPSPAARDASRSQ) is disordered.

It belongs to the UreF family. In terms of assembly, ureD, UreF and UreG form a complex that acts as a GTP-hydrolysis-dependent molecular chaperone, activating the urease apoprotein by helping to assemble the nickel containing metallocenter of UreC. The UreE protein probably delivers the nickel.

The protein resides in the cytoplasm. Its function is as follows. Required for maturation of urease via the functional incorporation of the urease nickel metallocenter. This is Urease accessory protein UreF from Mycobacterium marinum (strain ATCC BAA-535 / M).